We begin with the raw amino-acid sequence, 1102 residues long: Ubiquitin carboxyl-terminal hydrolase 7 (1102 aa).

A compositionally biased stretch (low complexity) spans 1-10 (MNHQQQQQQQ). The segment at 1–38 (MNHQQQQQQQKAGEQQLSEPEDMEMEAGDTDDPPRITQ) is disordered. The interaction with TSPYL5 stretch occupies residues 1 to 208 (MNHQQQQQQQ…APHGVAWDSK (208 aa)). Ser18 is subject to Phosphoserine. Over residues 19-31 (EPEDMEMEAGDTD) the composition is skewed to acidic residues. Ser49 is modified (phosphoserine). The interaction with p53/TP53, MDM2 and EBNA1 stretch occupies residues 53–208 (NTAEEDMEDD…APHGVAWDSK (156 aa)). One can recognise an MATH domain in the interval 68–195 (EATFQFTVER…DDKVTFEVFV (128 aa)). The interval 70–205 (TFQFTVERFS…QADAPHGVAW (136 aa)) is necessary for nuclear localization. Residues 214–521 (VGLKNQGATC…NAYMLVYIRE (308 aa)) form the USP domain. Cys223 functions as the Nucleophile in the catalytic mechanism. The active-site Proton acceptor is His464. Residues 622–801 (LWPMQARSNG…HRVDVIFCDK (180 aa)) are interaction with ICP0/VMW110. Lys869 carries the N6-acetyllysine; alternate modification. A Glycyl lysine isopeptide (Lys-Gly) (interchain with G-Cter in SUMO2); alternate cross-link involves residue Lys869. Lys869 participates in a covalent cross-link: Glycyl lysine isopeptide (Lys-Gly) (interchain with G-Cter in ubiquitin); alternate. Lys882 is covalently cross-linked (Glycyl lysine isopeptide (Lys-Gly) (interchain with G-Cter in SUMO2)). Position 963 is a phosphoserine (Ser963). N6-acetyllysine occurs at positions 1084 and 1096.

The protein belongs to the peptidase C19 family. As to quaternary structure, monomer. Homodimer. Part of a complex with DAXX, MDM2, RASSF1 and USP7. Part of a complex with DAXX, MDM2 and USP7. Interacts with MDM2; the interaction is independent of p53/TP53. Interacts with DAXX; the interaction is direct and independent of MDM2 and p53/TP53. Component of a complex composed of KMT2E/MLL5 (isoform 3), OGT (isoform 1) and USP7; the complex stabilizes KMT2E/MLL5, preventing KMT2E/MLL5 ubiquitination and proteasomal-mediated degradation. Interacts (via MATH domain) with KMT2E/MLL5 isoform 3. Interacts with OGT isoform 1. Interacts with FOXO4; the interaction is enhanced in presence of hydrogen peroxide and occurs independently of p53/TP53. Interacts with p53/TP53; the interaction is enhanced in response to DNA damage. Interacts with TSPYL5; this impairs interaction with p53/TP53. Interacts with PTEN; the interaction is direct. Interacts with ATXN1 and the strength of interaction is influenced by the length of the poly-Gln region in ATXN1. A weaker interaction seen with mutants having longer poly-Gln regions. Interacts with KIAA1530/UVSSA. Interacts with ABRAXAS2; the interaction is direct. Identified in a complex with TP53/p53 and ABRAXAS2. Interacts with MEX3C and antagonizes its ability to degrade mRNA. Interacts with DNMT1 and UHRF1. Interacts with FOXP3. Interacts (via MATH domain) with RNF220. Associated component of the Polycomb group (PcG) multiprotein PRC1-like complex. Interacts with EPOP. Interacts with OTUD4 and USP9X; the interaction is direct. Interacts with CRY2. Interacts with REST. Interacts with ERCC6. Part of a complex consisting of USP7, MAGEL2 and TRIM27; directly interacts with MAGEL2; directly interacts with TRIM27. In terms of assembly, (Microbial infection) Isoform 1 and isoform 2 interact with herpesvirus 1 trans-acting transcriptional protein ICP0/VMW110. Binding to ICP0/VMW110 may modulate the substrate specificity or activity of USP7 to stabilize viral proteins. (Microbial infection) Interacts with Epstein-Barr virus EBNA1; the interaction is independent and simultaneous to EBNA1 interaction with USP7 as well as necessary for PML nuclear bodies disruption by EBNA1. EBNA1, USP7 and CSNK2B form a ternary complex. EBNA1 shows a 10-fold higher affinity than p53/TP53 and can compete with it for USP7 binding. As to quaternary structure, (Microbial infection) Interacts with human cytomegalovirus proteins UL35 and UL35A; these interactions inhibit the ability of USP7 to form nuclear bodies. In terms of assembly, (Microbial infection) Interacts with herpes virus 8/HHV-8 proteins vIRF-1 and vIRF-3; these interactions may disrupt TP53 signaling pathway during viral infection by decreasing the availability of USP7 for deubiquitinating and stabilizing TP53. (Microbial infection) Interacts with herpes virus 8/HHV-8 protein vIRF-2; this interaction modulates antiviral signaling via disruption of USP7 interactions with innate immune signaling proteins TRAF3 and TRAF6 thus affecting their ubiquitination. Isoform 1: Phosphorylated. Isoform 1 is phosphorylated at positions Ser-18 and Ser-963. Isoform 2: Not phosphorylated. Post-translationally, isoform 1: Polyneddylated. Isoform 2: Not Polyneddylated. In terms of processing, isoform 1 and isoform 2: Not sumoylated. Isoform 1 and isoform 2: Polyubiquitinated by herpesvirus 1 trans-acting transcriptional protein ICP0/VMW110; leading to its subsequent proteasomal degradation. Isoform 1: Ubiquitinated at Lys-869. Expressed in neural progenitor cells (at protein level). Widely expressed. Overexpressed in prostate cancer.

The protein localises to the nucleus. It is found in the cytoplasm. Its subcellular location is the PML body. It localises to the chromosome. The catalysed reaction is Thiol-dependent hydrolysis of ester, thioester, amide, peptide and isopeptide bonds formed by the C-terminal Gly of ubiquitin (a 76-residue protein attached to proteins as an intracellular targeting signal).. Inhibited by N-ethyl-maleimide (NEM) and divalent cations. Tolerates high concentrations of NaCl but is inhibited at concentrations of 195 mM and higher. Its function is as follows. Hydrolase that deubiquitinates target proteins such as ARMC5, FOXO4, DEPTOR, KAT5, p53/TP53, MDM2, ERCC6, DNMT1, UHRF1, PTEN, KMT2E/MLL5 and DAXX. Together with DAXX, prevents MDM2 self-ubiquitination and enhances the E3 ligase activity of MDM2 towards p53/TP53, thereby promoting p53/TP53 ubiquitination and proteasomal degradation. Deubiquitinates p53/TP53, preventing degradation of p53/TP53, and enhances p53/TP53-dependent transcription regulation, cell growth repression and apoptosis. Deubiquitinates p53/TP53 and MDM2 and strongly stabilizes p53/TP53 even in the presence of excess MDM2, and also induces p53/TP53-dependent cell growth repression and apoptosis. Deubiquitination of FOXO4 in presence of hydrogen peroxide is not dependent on p53/TP53 and inhibits FOXO4-induced transcriptional activity. In association with DAXX, is involved in the deubiquitination and translocation of PTEN from the nucleus to the cytoplasm, both processes that are counteracted by PML. Deubiquitinates KMT2E/MLL5 preventing KMT2E/MLL5 proteasomal-mediated degradation. Involved in cell proliferation during early embryonic development. Involved in transcription-coupled nucleotide excision repair (TC-NER) in response to UV damage: recruited to DNA damage sites following interaction with KIAA1530/UVSSA and promotes deubiquitination of ERCC6, preventing UV-induced degradation of ERCC6. Involved in maintenance of DNA methylation via its interaction with UHRF1 and DNMT1: acts by mediating deubiquitination of UHRF1 and DNMT1, preventing their degradation and promoting DNA methylation by DNMT1. Deubiquitinates alkylation repair enzyme ALKBH3. OTUD4 recruits USP7 and USP9X to stabilize ALKBH3, thereby promoting the repair of alkylated DNA lesions. Acts as a chromatin regulator via its association with the Polycomb group (PcG) multiprotein PRC1-like complex; may act by deubiquitinating components of the PRC1-like complex. Able to mediate deubiquitination of histone H2B; it is however unsure whether this activity takes place in vivo. Exhibits a preference towards 'Lys-48'-linked ubiquitin chains. Increases regulatory T-cells (Treg) suppressive capacity by deubiquitinating and stabilizing the transcription factor FOXP3 which is crucial for Treg cell function. Plays a role in the maintenance of the circadian clock periodicity via deubiquitination and stabilization of the CRY1 and CRY2 proteins. Deubiquitinates REST, thereby stabilizing REST and promoting the maintenance of neural progenitor cells. Deubiquitinates SIRT7, inhibiting SIRT7 histone deacetylase activity and regulating gluconeogenesis. Involved in the regulation of WASH-dependent actin polymerization at the surface of endosomes and the regulation of endosomal protein recycling. It maintains optimal WASH complex activity and precise F-actin levels via deubiquitination of TRIM27 and WASHC1. Mediates the deubiquitination of phosphorylated DEPTOR, promoting its stability and leading to decreased mTORC1 signaling. (Microbial infection) Contributes to the overall stabilization and trans-activation capability of the herpesvirus 1 trans-acting transcriptional protein ICP0/VMW110 during HSV-1 infection. Functionally, (Microbial infection) Upon infection with Epstein-Barr virus, the interaction with viral EBNA1 increases the association of USP7 with PML proteins, which is required for the polyubiquitylation and degradation of PML. The polypeptide is Ubiquitin carboxyl-terminal hydrolase 7 (Homo sapiens (Human)).